The following is an 87-amino-acid chain: Bombyxin B-10 (87 aa).

Positions M1 to A19 are cleaved as a signal peptide. Cystine bridges form between C27-C73, C39-C86, and C72-C77. A propeptide spans S46–G64 (bombyxin B-10 C peptide).

This sequence belongs to the insulin family. Heterodimer of a B chain and an A chain linked by two disulfide bonds.

It is found in the secreted. Its function is as follows. Brain peptide responsible for activation of prothoracic glands to produce ecdysone in insects. This is Bombyxin B-10 (BBXB10) from Bombyx mori (Silk moth).